The sequence spans 70 residues: Exodeoxyribonuclease 7 small subunit (70 aa).

This sequence belongs to the XseB family. Heterooligomer composed of large and small subunits.

Its subcellular location is the cytoplasm. It carries out the reaction Exonucleolytic cleavage in either 5'- to 3'- or 3'- to 5'-direction to yield nucleoside 5'-phosphates.. In terms of biological role, bidirectionally degrades single-stranded DNA into large acid-insoluble oligonucleotides, which are then degraded further into small acid-soluble oligonucleotides. This Streptococcus pneumoniae serotype 2 (strain D39 / NCTC 7466) protein is Exodeoxyribonuclease 7 small subunit.